We begin with the raw amino-acid sequence, 1135 residues long: Eukaryotic translation initiation factor 3 subunit A (1135 aa).

The PCI domain occupies 319-501; that stretch reads LQRMAAHVLL…NSIYFGTDLT (183 aa). Composition is skewed to basic and acidic residues over residues 588-623 and 829-899; these read QNNA…EERE and AAEE…RGGD. Disordered regions lie at residues 588 to 631 and 829 to 1135; these read QNNA…QNEI and AAEE…VKRR. S908 bears the Phosphoserine mark. Basic and acidic residues-rich tracts occupy residues 920-971, 985-1045, 1053-1081, and 1104-1125; these read ERNE…EPDS, SRDD…EPQR, DAPR…RGDQ, and AREE…KAAD.

The protein belongs to the eIF-3 subunit A family. Component of the eukaryotic translation initiation factor 3 (eIF-3) complex. The eIF-3 complex interacts with pix.

The protein resides in the cytoplasm. Its function is as follows. RNA-binding component of the eukaryotic translation initiation factor 3 (eIF-3) complex, which is involved in protein synthesis of a specialized repertoire of mRNAs and, together with other initiation factors, stimulates binding of mRNA and methionyl-tRNAi to the 40S ribosome. The eIF-3 complex specifically targets and initiates translation of a subset of mRNAs involved in cell proliferation. This Drosophila erecta (Fruit fly) protein is Eukaryotic translation initiation factor 3 subunit A.